The primary structure comprises 137 residues: Acidic phospholipase A2 beta-bungarotoxin A6 chain (137 aa).

The signal sequence occupies residues 1 to 9 (AVCVSLLGA). Residues 10 to 17 (ANIPPQHL) constitute a propeptide that is removed on maturation. 6 disulfides stabilise this stretch: Cys-44-Cys-136, Cys-46-Cys-62, Cys-61-Cys-117, Cys-68-Cys-110, Cys-78-Cys-103, and Cys-96-Cys-108. The Ca(2+) site is built by Tyr-45, Gly-47, and Gly-49. His-65 is an active-site residue. A Ca(2+)-binding site is contributed by Asp-66. Residue Asp-111 is part of the active site.

The protein belongs to the phospholipase A2 family. Group I subfamily. D49 sub-subfamily. In terms of assembly, heterodimer; disulfide-linked. The A chains have phospholipase A2 activity and the B chains show homology with the basic protease inhibitors. Ca(2+) serves as cofactor. As to expression, expressed by the venom gland.

The protein localises to the secreted. It carries out the reaction a 1,2-diacyl-sn-glycero-3-phosphocholine + H2O = a 1-acyl-sn-glycero-3-phosphocholine + a fatty acid + H(+). Functionally, snake venom phospholipase A2 (PLA2) that inhibits neuromuscular transmission by blocking acetylcholine release from the nerve termini. PLA2 catalyzes the calcium-dependent hydrolysis of the 2-acyl groups in 3-sn-phosphoglycerides. This is Acidic phospholipase A2 beta-bungarotoxin A6 chain from Bungarus multicinctus (Many-banded krait).